The sequence spans 192 residues: dTTP/UTP pyrophosphatase (192 aa).

Catalysis depends on aspartate 72, which acts as the Proton acceptor.

Belongs to the Maf family. YhdE subfamily. A divalent metal cation serves as cofactor.

The protein localises to the cytoplasm. It carries out the reaction dTTP + H2O = dTMP + diphosphate + H(+). The enzyme catalyses UTP + H2O = UMP + diphosphate + H(+). Functionally, nucleoside triphosphate pyrophosphatase that hydrolyzes dTTP and UTP. May have a dual role in cell division arrest and in preventing the incorporation of modified nucleotides into cellular nucleic acids. The polypeptide is dTTP/UTP pyrophosphatase (Hydrogenovibrio crunogenus (strain DSM 25203 / XCL-2) (Thiomicrospira crunogena)).